Reading from the N-terminus, the 48-residue chain is Disintegrin accutin (48 aa).

The residue at position 1 (Q1) is a Pyrrolidone carboxylic acid. The region spanning 1-48 (QGAQCTAGPCCWPCKFLKEGTICRRARGDDLDDYCNGISADCPRNPYY) is the Disintegrin domain. 3 disulfide bridges follow: C5–C11, C10–C35, and C23–C42. The short motif at 27 to 29 (RGD) is the Cell attachment site element.

This sequence belongs to the venom metalloproteinase (M12B) family. P-II subfamily. P-IIa sub-subfamily. In terms of assembly, monomer (disintegrin). Expressed by the venom gland.

The protein localises to the secreted. Functionally, inhibit human platelet aggregation induced by ADP, collagen, thrombin or the thromboxane analog U46619 in platelet suspension with IC(50) values of 66-267 nM. Acts by inhibiting fibrinogen interaction with platelet receptors GPIIb/GPIIIa (ITGA2B/ITGB3). It also inhibits angiogenesis in vivo and in vitro by blocking integrin alpha-V/beta-3 (ITGAV/ITGB3) of endothelial cells and by inducing apoptosis. The protein is Disintegrin accutin of Deinagkistrodon acutus (Hundred-pace snake).